Consider the following 426-residue polypeptide: Serine--tRNA ligase (426 aa).

231 to 233 contributes to the L-serine binding site; sequence TAE. Position 262–264 (262–264) interacts with ATP; it reads RSE. Residue Glu285 coordinates L-serine. An ATP-binding site is contributed by 349 to 352; that stretch reads EISS. Residue Ser385 coordinates L-serine.

This sequence belongs to the class-II aminoacyl-tRNA synthetase family. Type-1 seryl-tRNA synthetase subfamily. Homodimer. The tRNA molecule binds across the dimer.

It is found in the cytoplasm. The catalysed reaction is tRNA(Ser) + L-serine + ATP = L-seryl-tRNA(Ser) + AMP + diphosphate + H(+). It catalyses the reaction tRNA(Sec) + L-serine + ATP = L-seryl-tRNA(Sec) + AMP + diphosphate + H(+). The protein operates within aminoacyl-tRNA biosynthesis; selenocysteinyl-tRNA(Sec) biosynthesis; L-seryl-tRNA(Sec) from L-serine and tRNA(Sec): step 1/1. In terms of biological role, catalyzes the attachment of serine to tRNA(Ser). Is also able to aminoacylate tRNA(Sec) with serine, to form the misacylated tRNA L-seryl-tRNA(Sec), which will be further converted into selenocysteinyl-tRNA(Sec). The polypeptide is Serine--tRNA ligase (Brevibacillus brevis (strain 47 / JCM 6285 / NBRC 100599)).